The sequence spans 222 residues: UPF0128 protein PF1488 (222 aa).

It belongs to the UPF0128 family.

This Pyrococcus furiosus (strain ATCC 43587 / DSM 3638 / JCM 8422 / Vc1) protein is UPF0128 protein PF1488.